Reading from the N-terminus, the 278-residue chain is Large ribosomal subunit protein uL2 (278 aa).

Basic residues-rich tracts occupy residues 210-219 (RSRWLGKRPQ) and 252-263 (KKSRGIKTRNSK). A disordered region spans residues 210 to 278 (RSRWLGKRPQ…LIIRHRKGNK (69 aa)).

It belongs to the universal ribosomal protein uL2 family. Part of the 50S ribosomal subunit. Forms a bridge to the 30S subunit in the 70S ribosome.

One of the primary rRNA binding proteins. Required for association of the 30S and 50S subunits to form the 70S ribosome, for tRNA binding and peptide bond formation. It has been suggested to have peptidyltransferase activity; this is somewhat controversial. Makes several contacts with the 16S rRNA in the 70S ribosome. The polypeptide is Large ribosomal subunit protein uL2 (Lactobacillus johnsonii (strain CNCM I-12250 / La1 / NCC 533)).